Consider the following 56-residue polypeptide: Potassium channel toxin alpha-KTx 9.1 (56 aa).

The N-terminal stretch at 1 to 28 (MSRLFTLVLIVLAMNVMMAIISDPVVEA) is a signal peptide. 3 disulfide bridges follow: Cys-31-Cys-47, Cys-34-Cys-52, and Cys-38-Cys-54.

Expressed by the venom gland.

Its subcellular location is the secreted. In terms of biological role, blocks small conductance calcium-activated potassium channels (KCNN, SK). Weakly inhibits the Kv7.1/KCNQ1 channel (10 uM of the toxin inhibits currents by 23.3%). Low toxicity by intracerebroventricular injection into mice. This Olivierus martensii (Manchurian scorpion) protein is Potassium channel toxin alpha-KTx 9.1.